Reading from the N-terminus, the 436-residue chain is 3-ketoacyl-CoA thiolase (436 aa).

C99 functions as the Acyl-thioester intermediate in the catalytic mechanism. Active-site proton acceptor residues include H392 and C422.

It belongs to the thiolase-like superfamily. Thiolase family. In terms of assembly, heterotetramer of two alpha chains (FadJ) and two beta chains (FadI).

The protein localises to the cytoplasm. It catalyses the reaction an acyl-CoA + acetyl-CoA = a 3-oxoacyl-CoA + CoA. Its pathway is lipid metabolism; fatty acid beta-oxidation. In terms of biological role, catalyzes the final step of fatty acid oxidation in which acetyl-CoA is released and the CoA ester of a fatty acid two carbons shorter is formed. The protein is 3-ketoacyl-CoA thiolase of Shewanella oneidensis (strain ATCC 700550 / JCM 31522 / CIP 106686 / LMG 19005 / NCIMB 14063 / MR-1).